Consider the following 399-residue polypeptide: MERGGYGGGSGQGYNNFAVPPPNYQQMPNKTGNYNEPPPNYGKQGGGYDSGSGHRGSGGSGNGGGGGGSWNDRGGNSYGNGGASKDSYNKGHGGYSGGGGGGGGGGGGGSGGNDMITQEDTIFVSGMDPSTTEQDIETHFGAIGIIKKDKRTMKPKIWLYKNKETGASKGEATVTYDDTNAAQSAIEWFDGRDFNGNAIKVSLAQRQNNWNKGGGGGGGGGGRGGFGGRRGGGGGGGGGGGGGGRFDRGGGGGGGRYDRGGGGGGGGGGGNVQPRDGDWKCNSCNNTNFAWRNECNRCKTPKGDDEGSSGGGGGGGYGGGGGGGGYDRGNDRGSGGGGYHNRDRGGNSQGGGGGGGGGGGYSRFNDNNGGGRGGRGGGGGNRRDGGPMRNDGGMRSRPY.

The span at 1 to 12 (MERGGYGGGSGQ) shows a compositional bias: gly residues. Positions 1–82 (MERGGYGGGS…RGGNSYGNGG (82 aa)) are disordered. Residues 24 to 34 (YQQMPNKTGNY) are compositionally biased toward polar residues. The segment covering 43–69 (KQGGGYDSGSGHRGSGGSGNGGGGGGS) has biased composition (gly residues). Residues 120 to 206 (DTIFVSGMDP…NAIKVSLAQR (87 aa)) enclose the RRM domain. Disordered regions lie at residues 209–276 (NWNK…QPRD) and 300–399 (TPKG…SRPY). The span at 212 to 271 (KGGGGGGGGGGRGGFGGRRGGGGGGGGGGGGGGRFDRGGGGGGGRYDRGGGGGGGGGGGN) shows a compositional bias: gly residues. Residues 275–304 (RDGDWKCNSCNNTNFAWRNECNRCKTPKGD) form a RanBP2-type zinc finger. 3 stretches are compositionally biased toward gly residues: residues 308–339 (SSGG…GGGY), 347–361 (NSQG…GGGY), and 368–380 (NGGG…GGGG). Low complexity predominate over residues 387–399 (PMRNDGGMRSRPY).

This sequence belongs to the RRM TET family. In terms of tissue distribution, ubiquitous. Enriched in the brain and central nervous system during embryogenesis. Enriched in the adult head. Embryos contain both isoforms A and B, whereas later in development (heads and torsos) only isoform B is detected.

It is found in the nucleus. May participate in a function common to the expression of most genes transcribed by RNA polymerase II. The protein is RNA-binding protein cabeza (caz) of Drosophila melanogaster (Fruit fly).